The chain runs to 361 residues: Holliday junction branch migration complex subunit RuvB (361 aa).

Polar residues-rich tracts occupy residues 1-15 and 28-40; these read MAIK…SPNV and ERST…QQEA. Residues 1 to 41 are disordered; it reads MAIKRSGNNNLSPNVKSDLLSPEVIPQERSTSPELEQQEAS. The tract at residues 13-203 is large ATPase domain (RuvB-L); sequence PNVKSDLLSP…FGLIQRLRFY (191 aa). ATP contacts are provided by residues L42, R43, G84, K87, T88, T89, 150–152, R193, Y203, and R240; that span reads EDF. T88 is a Mg(2+) binding site. Residues 204-274 form a small ATPAse domain (RuvB-S) region; sequence EVDELQQIIL…LASEALDLYQ (71 aa). The head domain (RuvB-H) stretch occupies residues 277-361; it reads KRGLDWTDRL…PTPLLPWKES (85 aa). Residues R332 and R337 each contribute to the DNA site.

This sequence belongs to the RuvB family. Homohexamer. Forms an RuvA(8)-RuvB(12)-Holliday junction (HJ) complex. HJ DNA is sandwiched between 2 RuvA tetramers; dsDNA enters through RuvA and exits via RuvB. An RuvB hexamer assembles on each DNA strand where it exits the tetramer. Each RuvB hexamer is contacted by two RuvA subunits (via domain III) on 2 adjacent RuvB subunits; this complex drives branch migration. In the full resolvosome a probable DNA-RuvA(4)-RuvB(12)-RuvC(2) complex forms which resolves the HJ.

The protein resides in the cytoplasm. The catalysed reaction is ATP + H2O = ADP + phosphate + H(+). Its function is as follows. The RuvA-RuvB-RuvC complex processes Holliday junction (HJ) DNA during genetic recombination and DNA repair, while the RuvA-RuvB complex plays an important role in the rescue of blocked DNA replication forks via replication fork reversal (RFR). RuvA specifically binds to HJ cruciform DNA, conferring on it an open structure. The RuvB hexamer acts as an ATP-dependent pump, pulling dsDNA into and through the RuvAB complex. RuvB forms 2 homohexamers on either side of HJ DNA bound by 1 or 2 RuvA tetramers; 4 subunits per hexamer contact DNA at a time. Coordinated motions by a converter formed by DNA-disengaged RuvB subunits stimulates ATP hydrolysis and nucleotide exchange. Immobilization of the converter enables RuvB to convert the ATP-contained energy into a lever motion, pulling 2 nucleotides of DNA out of the RuvA tetramer per ATP hydrolyzed, thus driving DNA branch migration. The RuvB motors rotate together with the DNA substrate, which together with the progressing nucleotide cycle form the mechanistic basis for DNA recombination by continuous HJ branch migration. Branch migration allows RuvC to scan DNA until it finds its consensus sequence, where it cleaves and resolves cruciform DNA. In terms of biological role, participates in UV-tolerance of Synechocystis PCC 6803. This is Holliday junction branch migration complex subunit RuvB from Synechocystis sp. (strain ATCC 27184 / PCC 6803 / Kazusa).